A 470-amino-acid polypeptide reads, in one-letter code: 3-isopropylmalate dehydratase large subunit (470 aa).

The segment covering proline 294 to proline 307 has biased composition (polar residues). Positions proline 294–aspartate 313 are disordered. 3 residues coordinate [4Fe-4S] cluster: cysteine 347, cysteine 407, and cysteine 410.

Belongs to the aconitase/IPM isomerase family. LeuC type 1 subfamily. Heterodimer of LeuC and LeuD. The cofactor is [4Fe-4S] cluster.

The catalysed reaction is (2R,3S)-3-isopropylmalate = (2S)-2-isopropylmalate. The protein operates within amino-acid biosynthesis; L-leucine biosynthesis; L-leucine from 3-methyl-2-oxobutanoate: step 2/4. Functionally, catalyzes the isomerization between 2-isopropylmalate and 3-isopropylmalate, via the formation of 2-isopropylmaleate. The chain is 3-isopropylmalate dehydratase large subunit from Akkermansia muciniphila (strain ATCC BAA-835 / DSM 22959 / JCM 33894 / BCRC 81048 / CCUG 64013 / CIP 107961 / Muc).